Reading from the N-terminus, the 232-residue chain is MIKALEDDLSQTFDIHFNNHALLDEAFTQASYVNEHPHQELKFYERIEFLGDAVLQLIVSEYLFKRYPEMPQGKLTRLRAAMVCEASFSDFAKECHFDQYIRLGKGEEKSGARQRSSLLCDIFESFIGALYLDQGRAAVERFVRIVIFPKLDEGKFDHIIDHKSELQELLQKNGDVEIDYELVSEEGPENDLIFTVSVTADHKKLATGTGHSKKVAEQNAANQALQLLRRPK.

The RNase III domain maps to 2–135 (IKALEDDLSQ…FIGALYLDQG (134 aa)). Glu48 serves as a coordination point for Mg(2+). Residue Asp52 is part of the active site. Asp121 and Glu124 together coordinate Mg(2+). Glu124 is a catalytic residue. Residues 161–230 (DHKSELQELL…ANQALQLLRR (70 aa)) form the DRBM domain.

It belongs to the ribonuclease III family. Homodimer. Mg(2+) is required as a cofactor.

It localises to the cytoplasm. It catalyses the reaction Endonucleolytic cleavage to 5'-phosphomonoester.. Functionally, digests double-stranded RNA. Involved in the processing of primary rRNA transcript to yield the immediate precursors to the large and small rRNAs (23S and 16S). Processes some mRNAs, and tRNAs when they are encoded in the rRNA operon. Processes pre-crRNA and tracrRNA of type II CRISPR loci if present in the organism. This Pediococcus pentosaceus (strain ATCC 25745 / CCUG 21536 / LMG 10740 / 183-1w) protein is Ribonuclease 3.